We begin with the raw amino-acid sequence, 1070 residues long: DNA-directed RNA polymerase subunit beta (1070 aa).

Belongs to the RNA polymerase beta chain family. In terms of assembly, in plastids the minimal PEP RNA polymerase catalytic core is composed of four subunits: alpha, beta, beta', and beta''. When a (nuclear-encoded) sigma factor is associated with the core the holoenzyme is formed, which can initiate transcription.

The protein localises to the plastid. It is found in the chloroplast. It carries out the reaction RNA(n) + a ribonucleoside 5'-triphosphate = RNA(n+1) + diphosphate. Its function is as follows. DNA-dependent RNA polymerase catalyzes the transcription of DNA into RNA using the four ribonucleoside triphosphates as substrates. The sequence is that of DNA-directed RNA polymerase subunit beta from Illicium oligandrum (Star anise).